The following is a 136-amino-acid chain: Small ribosomal subunit protein uS9 (136 aa).

A disordered region spans residues 111–136 (DARRTEPHKPSRSTKGPRAKRQKSYR). Basic residues predominate over residues 120 to 136 (PSRSTKGPRAKRQKSYR).

It belongs to the universal ribosomal protein uS9 family.

This chain is Small ribosomal subunit protein uS9 (rps9), found in Methanocaldococcus jannaschii (strain ATCC 43067 / DSM 2661 / JAL-1 / JCM 10045 / NBRC 100440) (Methanococcus jannaschii).